Here is a 622-residue protein sequence, read N- to C-terminus: Palmitoyltransferase ZDHHC13 (622 aa).

Residue Met-1 is modified to N-acetylmethionine. Residues 1-291 lie on the Cytoplasmic side of the membrane; the sequence is MEGPGLGSQC…RLWRWLQKCE (291 aa). 7 ANK repeats span residues 43–78, 81–110, 115–144, 148–177, 181–211, 216–245, and 249–277; these read PLIE…VRQP, ENVS…VVDQ, LNST…DPTL, EGFS…SVNM, NGQT…SLNV, HQNT…SLDI, and KGET…KMRA. A helical membrane pass occupies residues 292–312; sequence LFLLLMLSVITMWAVGYILDF. The Lumenal portion of the chain corresponds to 313–320; sequence NSDSWLLK. Residues 321-341 traverse the membrane as a helical segment; it reads GCLLVTLFFLTSLFPRFLVGY. Topologically, residues 342 to 347 are cytoplasmic; it reads KNLVYL. The helical transmembrane segment at 348 to 368 threads the bilayer; it reads PTAFLLSSVFWIFMTWFILFF. The Lumenal segment spans residues 369-370; the sequence is PD. A helical membrane pass occupies residues 371–391; sequence LAGAPFYFSFIFSIVAFLYFF. Residues 392–470 lie on the Cytoplasmic side of the membrane; sequence YKTWATDPGF…RCIGFGNHHY (79 aa). Residues 426–476 enclose the DHHC domain; that stretch reads TFCTSCLIRKPLRSLHCHVCNSCVARYDQHCLWTGRCIGFGNHHYYIFFLF. Residue Cys-456 is the S-palmitoyl cysteine intermediate of the active site. The chain crosses the membrane as a helical span at residues 471 to 491; the sequence is YIFFLFFLSMVCGWIIYGSFI. Topologically, residues 492 to 518 are lumenal; the sequence is YWSSHCATTFKEDGLWTYLNQIVACSP. The helical transmembrane segment at 519–539 threads the bilayer; that stretch reads WVLYILMLATFHFSWSTFLLL. The Cytoplasmic segment spans residues 540 to 622; the sequence is NQLFQIAFLG…PAREKVLRSV (83 aa).

The protein belongs to the DHHC palmitoyltransferase family. AKR/ZDHHC17 subfamily. As to quaternary structure, interacts (via ANK repeats) with CLIP3. Interacts (via ANK repeats) with DNAJC5 (via C-terminus). Interacts (via ANK repeats) with HTT. Interacts (via ANK repeats) with MAP6. Interacts (via ANK repeats) with SNAP23. Interacts (via ANK repeats) with SNAP25. May interact (via ANK repeats) with SPRED2.

Its subcellular location is the golgi apparatus membrane. It is found in the cytoplasmic vesicle membrane. The catalysed reaction is L-cysteinyl-[protein] + hexadecanoyl-CoA = S-hexadecanoyl-L-cysteinyl-[protein] + CoA. Its function is as follows. Palmitoyltransferase that could catalyze the addition of palmitate onto various protein substrates. Palmitoyltransferase for HTT and GAD2. May play a role in Mg(2+) transport. This Pongo abelii (Sumatran orangutan) protein is Palmitoyltransferase ZDHHC13.